A 90-amino-acid polypeptide reads, in one-letter code: Cluster 41 protein AFLA_114800 (90 aa).

A helical transmembrane segment spans residues 55–77 (GLLLLCCFYPIGNLILLVRLSLV). N-linked (GlcNAc...) asparagine glycosylation is present at asparagine 80.

It localises to the membrane. In terms of biological role, cluster 41 protein; part of the gene cluster 41 that mediates the biosynthesis of an extracellular and diffusible metabolite that is able to stimulate colony sclerotial production. The sequence is that of Cluster 41 protein AFLA_114800 from Aspergillus flavus (strain ATCC 200026 / FGSC A1120 / IAM 13836 / NRRL 3357 / JCM 12722 / SRRC 167).